We begin with the raw amino-acid sequence, 245 residues long: Demethylmenaquinone methyltransferase (245 aa).

Residues threonine 70, aspartate 90, and 118 to 119 contribute to the S-adenosyl-L-methionine site; that span reads DC.

Belongs to the class I-like SAM-binding methyltransferase superfamily. MenG/UbiE family.

The enzyme catalyses a 2-demethylmenaquinol + S-adenosyl-L-methionine = a menaquinol + S-adenosyl-L-homocysteine + H(+). The protein operates within quinol/quinone metabolism; menaquinone biosynthesis; menaquinol from 1,4-dihydroxy-2-naphthoate: step 2/2. Its function is as follows. Methyltransferase required for the conversion of demethylmenaquinol (DMKH2) to menaquinol (MKH2). This Bacteroides fragilis (strain ATCC 25285 / DSM 2151 / CCUG 4856 / JCM 11019 / LMG 10263 / NCTC 9343 / Onslow / VPI 2553 / EN-2) protein is Demethylmenaquinone methyltransferase.